We begin with the raw amino-acid sequence, 872 residues long: UPF0182 protein Noc_0961 (872 aa).

The next 7 helical transmembrane spans lie at Phe-8–Glu-28, Leu-56–Val-76, Ser-109–Phe-129, Leu-159–Leu-179, Trp-207–Gln-227, Pro-254–Ile-274, and Thr-282–Leu-302.

Belongs to the UPF0182 family.

The protein localises to the cell membrane. The polypeptide is UPF0182 protein Noc_0961 (Nitrosococcus oceani (strain ATCC 19707 / BCRC 17464 / JCM 30415 / NCIMB 11848 / C-107)).